A 77-amino-acid polypeptide reads, in one-letter code: Fungal protease inhibitor F (77 aa).

The first 22 residues, 1-22, serve as a signal peptide directing secretion; it reads MASKNLFVLFFIFALFAANIAA. Disulfide bonds link Cys25/Cys57, Cys36/Cys49, Cys40/Cys77, and Cys59/Cys71.

The protein belongs to the protease inhibitor I40 family. In terms of tissue distribution, hemolymph.

It is found in the secreted. In terms of biological role, highly specific for fungal protease and subtilisin. This chain is Fungal protease inhibitor F, found in Bombyx mori (Silk moth).